We begin with the raw amino-acid sequence, 109 residues long: Elongin-C (109 aa).

Belongs to the SKP1 family.

The protein resides in the nucleus. Its function is as follows. SIII, also known as elongin, is a general transcription elongation factor that increases the RNA polymerase II transcription elongation past template-encoded arresting sites. Subunit A is transcriptionally active and its transcription activity is strongly enhanced by binding to the dimeric complex of the SIII regulatory subunits B and C (elongin BC complex). The elongin BC complex seems to be involved as an adapter protein in the proteasomal degradation of target proteins via different E3 ubiquitin ligase complexes. The polypeptide is Elongin-C (tceb1) (Dictyostelium discoideum (Social amoeba)).